The following is a 64-amino-acid chain: U-poneritoxin(01)-Om1a (64 aa).

Positions 1 to 27 are cleaved as a signal peptide; the sequence is MKPSGLTFAFLVVFMMAIMYNSVQVTA. Positions 28–45 are excised as a propeptide; it reads DADADAEAEALANALAEA. Residue methionine 62 is modified to Methionine amide.

Post-translationally, truncated sequences of this peptide have also been found in the venom. It is possible they have been cleaved in the venom. In terms of tissue distribution, expressed by the venom gland.

The protein localises to the secreted. Functionally, antimicrobial peptide with activities against E.coli (MIC=1.3 uM), S.aureus (MIC=3.1 uM), and S.cerevisiae (MIC=50 uM). Also shows histamine-releasing activity (32.9% at 10 uM). Does not show hemolytic activity, even at 50 uM. It is a short peptide for which no alpha-helical region has been predicted. In Odontomachus monticola (Trap-jaw ant), this protein is U-poneritoxin(01)-Om1a.